The primary structure comprises 409 residues: Tyrosine--tRNA ligase (409 aa).

L-tyrosine is bound at residue Tyr35. The 'HIGH' region motif lies at 40–49 (PTGSSLHVGH). L-tyrosine is bound by residues Tyr168 and Gln172. The 'KMSKS' region motif lies at 228–232 (KMGKT). Residue Lys231 coordinates ATP. The S4 RNA-binding domain maps to 339-404 (IKVTDLFVQV…AGKKRVVRIV (66 aa)).

The protein belongs to the class-I aminoacyl-tRNA synthetase family. TyrS type 1 subfamily. As to quaternary structure, homodimer.

Its subcellular location is the cytoplasm. The catalysed reaction is tRNA(Tyr) + L-tyrosine + ATP = L-tyrosyl-tRNA(Tyr) + AMP + diphosphate + H(+). Its function is as follows. Catalyzes the attachment of tyrosine to tRNA(Tyr) in a two-step reaction: tyrosine is first activated by ATP to form Tyr-AMP and then transferred to the acceptor end of tRNA(Tyr). The protein is Tyrosine--tRNA ligase of Treponema pallidum (strain Nichols).